The primary structure comprises 424 residues: Serine--tRNA ligase (424 aa).

229–231 (TAE) lines the L-serine pocket. ATP is bound by residues 260 to 262 (RKE) and valine 276. Glutamate 283 provides a ligand contact to L-serine. 347–350 (ELVS) contacts ATP. Threonine 383 contributes to the L-serine binding site.

The protein belongs to the class-II aminoacyl-tRNA synthetase family. Type-1 seryl-tRNA synthetase subfamily. As to quaternary structure, homodimer. The tRNA molecule binds across the dimer.

The protein resides in the cytoplasm. The catalysed reaction is tRNA(Ser) + L-serine + ATP = L-seryl-tRNA(Ser) + AMP + diphosphate + H(+). It catalyses the reaction tRNA(Sec) + L-serine + ATP = L-seryl-tRNA(Sec) + AMP + diphosphate + H(+). Its pathway is aminoacyl-tRNA biosynthesis; selenocysteinyl-tRNA(Sec) biosynthesis; L-seryl-tRNA(Sec) from L-serine and tRNA(Sec): step 1/1. Its function is as follows. Catalyzes the attachment of serine to tRNA(Ser). Is also able to aminoacylate tRNA(Sec) with serine, to form the misacylated tRNA L-seryl-tRNA(Sec), which will be further converted into selenocysteinyl-tRNA(Sec). The sequence is that of Serine--tRNA ligase from Methanosphaera stadtmanae (strain ATCC 43021 / DSM 3091 / JCM 11832 / MCB-3).